Reading from the N-terminus, the 910-residue chain is DNA mismatch repair protein MutS (910 aa).

The span at 1–15 (MPRSAAQSEEQTLQG) shows a compositional bias: polar residues. Residues 1–94 (MPRSAAQSEE…EPAWAHHSQV (94 aa)) are disordered. The segment covering 44–54 (DASLSADAAAR) has biased composition (low complexity). 726-733 (GPNASGKS) provides a ligand contact to ATP.

Belongs to the DNA mismatch repair MutS family.

In terms of biological role, this protein is involved in the repair of mismatches in DNA. It is possible that it carries out the mismatch recognition step. This protein has a weak ATPase activity. In Synechococcus sp. (strain WH7803), this protein is DNA mismatch repair protein MutS.